The primary structure comprises 390 residues: S-adenosylmethionine synthase 4 (390 aa).

E9 serves as a coordination point for Mg(2+). H15 contributes to the ATP binding site. A K(+)-binding site is contributed by E43. Residues E56 and Q99 each coordinate L-methionine. Residues 167-169 (DGK), 235-238 (SGRF), D246, 252-253 (RK), A269, K273, and K277 contribute to the ATP site. An L-methionine-binding site is contributed by D246. K277 is an L-methionine binding site.

It belongs to the AdoMet synthase family. As to quaternary structure, homotetramer. The cofactor is Mn(2+). Mg(2+) is required as a cofactor. Requires Co(2+) as cofactor. K(+) serves as cofactor.

It is found in the cytoplasm. The enzyme catalyses L-methionine + ATP + H2O = S-adenosyl-L-methionine + phosphate + diphosphate. The protein operates within amino-acid biosynthesis; S-adenosyl-L-methionine biosynthesis; S-adenosyl-L-methionine from L-methionine: step 1/1. In terms of biological role, catalyzes the formation of S-adenosylmethionine from methionine and ATP. The reaction comprises two steps that are both catalyzed by the same enzyme: formation of S-adenosylmethionine (AdoMet) and triphosphate, and subsequent hydrolysis of the triphosphate. This Populus trichocarpa (Western balsam poplar) protein is S-adenosylmethionine synthase 4 (METK4).